The chain runs to 214 residues: Octanoyltransferase (214 aa).

The region spanning 28 to 203 (GSGAETLLLL…RFEGFLDEFM (176 aa)) is the BPL/LPL catalytic domain. Substrate-binding positions include 66–73 (RGGDVTYH), 133–135 (SIG), and 146–148 (GFA). Cysteine 164 (acyl-thioester intermediate) is an active-site residue.

This sequence belongs to the LipB family.

It localises to the cytoplasm. It carries out the reaction octanoyl-[ACP] + L-lysyl-[protein] = N(6)-octanoyl-L-lysyl-[protein] + holo-[ACP] + H(+). It participates in protein modification; protein lipoylation via endogenous pathway; protein N(6)-(lipoyl)lysine from octanoyl-[acyl-carrier-protein]: step 1/2. In terms of biological role, catalyzes the transfer of endogenously produced octanoic acid from octanoyl-acyl-carrier-protein onto the lipoyl domains of lipoate-dependent enzymes. Lipoyl-ACP can also act as a substrate although octanoyl-ACP is likely to be the physiological substrate. The chain is Octanoyltransferase from Geotalea uraniireducens (strain Rf4) (Geobacter uraniireducens).